Reading from the N-terminus, the 342-residue chain is Large ribosomal subunit protein uL3 (342 aa).

Residues 1 to 22 (MGHRKLSSPRRGSAGLRPRKRA) form a disordered region.

Belongs to the universal ribosomal protein uL3 family. As to quaternary structure, part of the 50S ribosomal subunit. Forms a cluster with proteins L14 and L24e.

Functionally, one of the primary rRNA binding proteins, it binds directly near the 3'-end of the 23S rRNA, where it nucleates assembly of the 50S subunit. The chain is Large ribosomal subunit protein uL3 from Sulfolobus acidocaldarius (strain ATCC 33909 / DSM 639 / JCM 8929 / NBRC 15157 / NCIMB 11770).